Consider the following 162-residue polypeptide: NADH-quinone oxidoreductase subunit I (162 aa).

4Fe-4S ferredoxin-type domains are found at residues 52–82 (LRRY…IEAG) and 93–122 (TRYD…EGPN). The [4Fe-4S] cluster site is built by cysteine 62, cysteine 65, cysteine 68, cysteine 72, cysteine 102, cysteine 105, cysteine 108, and cysteine 112.

Belongs to the complex I 23 kDa subunit family. NDH-1 is composed of 14 different subunits. Subunits NuoA, H, J, K, L, M, N constitute the membrane sector of the complex. It depends on [4Fe-4S] cluster as a cofactor.

It is found in the cell inner membrane. The catalysed reaction is a quinone + NADH + 5 H(+)(in) = a quinol + NAD(+) + 4 H(+)(out). In terms of biological role, NDH-1 shuttles electrons from NADH, via FMN and iron-sulfur (Fe-S) centers, to quinones in the respiratory chain. The immediate electron acceptor for the enzyme in this species is believed to be ubiquinone. Couples the redox reaction to proton translocation (for every two electrons transferred, four hydrogen ions are translocated across the cytoplasmic membrane), and thus conserves the redox energy in a proton gradient. The chain is NADH-quinone oxidoreductase subunit I from Xanthobacter autotrophicus (strain ATCC BAA-1158 / Py2).